We begin with the raw amino-acid sequence, 156 residues long: Small ribosomal subunit protein uS7 (156 aa).

It belongs to the universal ribosomal protein uS7 family. In terms of assembly, part of the 30S ribosomal subunit. Contacts proteins S9 and S11.

Functionally, one of the primary rRNA binding proteins, it binds directly to 16S rRNA where it nucleates assembly of the head domain of the 30S subunit. Is located at the subunit interface close to the decoding center, probably blocks exit of the E-site tRNA. This Acidithiobacillus ferrooxidans (strain ATCC 53993 / BNL-5-31) (Leptospirillum ferrooxidans (ATCC 53993)) protein is Small ribosomal subunit protein uS7.